The primary structure comprises 433 residues: UPF0597 protein PG_0909 (433 aa).

It belongs to the UPF0597 family.

This chain is UPF0597 protein PG_0909, found in Porphyromonas gingivalis (strain ATCC BAA-308 / W83).